The chain runs to 283 residues: DegV domain-containing protein lin2658 (283 aa).

In terms of domain architecture, DegV spans 5-282 (IAVVTDSTTY…EGALGLTWSI (278 aa)). Residues serine 63 and serine 96 each contribute to the hexadecanoate site.

In terms of biological role, may bind long-chain fatty acids, such as palmitate, and may play a role in lipid transport or fatty acid metabolism. The protein is DegV domain-containing protein lin2658 of Listeria innocua serovar 6a (strain ATCC BAA-680 / CLIP 11262).